The sequence spans 239 residues: MNFPRPLVPATLVQRYKRFLFDAILADGTAITGSCPNTGSMRGLTIPGSPIWLSEHDSPTRKYRHMLEIVEADGTLVGINTGLPNRIAEEAIMAGQVGNLHTYGTLRREQRYGRNSRIDILLSDAEKGLAYVEVKNVHFSRVRGLAEFPDSPTQRGAKHLEELGDMVEAGHRAIMLYLIQRGDCSRFRICRELDPVYARAFERASARGVEAYAVKCAVSPGQIVAAGPIVVDEPVPAVL.

The protein belongs to the SfsA family.

The chain is Sugar fermentation stimulation protein homolog from Rhizobium meliloti (strain 1021) (Ensifer meliloti).